A 101-amino-acid polypeptide reads, in one-letter code: Protein S100-A4 (101 aa).

An N-acetylalanine modification is found at A2. 2 EF-hand domains span residues 12-47 (IVST…SFLG) and 50-85 (TDEA…IAMM). Ca(2+) contacts are provided by K28 and E33. An N6-acetyllysine modification is found at K35. Ca(2+)-binding residues include D63, N65, D67, E69, and E74.

The protein belongs to the S-100 family. Homodimer. Interacts with PPFIBP1 in a calcium-dependent mode. Interacts with PGLYRP1; this complex acts as a chemoattractant that promotes lymphocyte movement. Interacts with MYH9; this interaction increases cell motility. Interacts with Annexin 2/ANXA2. Interacts with TP53; this interaction promotes TP53 degradation. Interacts with CCR5 and CXCR3. Interacts with FCGR3A; this interaction inhibits PKC-dependent phosphorylation of FCGR3A. Specifically expressed in different metastatic cells.

Its subcellular location is the secreted. It is found in the nucleus. The protein resides in the cytoplasm. Calcium-binding protein that plays a role in various cellular processes including motility, angiogenesis, cell differentiation, apoptosis, and autophagy. Increases cell motility and invasiveness by interacting with non-muscle myosin heavy chain (NMMHC) IIA/MYH9. Mechanistically, promotes filament depolymerization and increases the amount of soluble myosin-IIA, resulting in the formation of stable protrusions facilitating chemotaxis. Also modulates the pro-apoptotic function of TP53 by binding to its C-terminal transactivation domain within the nucleus and reducing its protein levels. Within the extracellular space, stimulates cytokine production including granulocyte colony-stimulating factor and CCL24 from T-lymphocytes. In addition, stimulates T-lymphocyte chemotaxis by acting as a chemoattractant complex with PGLYRP1 that promotes lymphocyte migration via CCR5 and CXCR3 receptors. The sequence is that of Protein S100-A4 (S100a4) from Mus musculus (Mouse).